Reading from the N-terminus, the 2221-residue chain is RNA-directed RNA polymerase L (2221 aa).

Positions 29–292 (KTVLLSQVNF…SERETLIEAE (264 aa)) are endonuclease. E54, D91, and E104 together coordinate Mn(2+). K117 is an active-site residue. In terms of domain architecture, RdRp catalytic spans 1171–1369 (LDMKSVVRLS…YLSSKLNKFI (199 aa)). D1327 contributes to the Mg(2+) binding site.

Belongs to the Bunyavirales RNA polymerase family. In terms of assembly, homomultimer; the oligomeric structure is essential for the polymerase activity. Interacts with nucleoprotein N. Interacts with protein Z; this interaction inhibits viral transcription and replication, Z partially blocks the product exit tunnel for the releasing nascent RNA product. Requires Mn(2+) as cofactor. Mg(2+) serves as cofactor.

It localises to the virion. Its subcellular location is the host cytoplasm. It catalyses the reaction RNA(n) + a ribonucleoside 5'-triphosphate = RNA(n+1) + diphosphate. In terms of biological role, RNA-dependent RNA polymerase, which is responsible for the replication and transcription of the viral RNA genome using antigenomic RNA as an intermediate. During transcription, synthesizes subgenomic RNAs and assures their capping by a cap-snatching mechanism, which involves the endonuclease activity cleaving the host capped pre-mRNAs. These short capped RNAs are then used as primers for viral transcription. The 3'-end of subgenomic mRNAs molecules are heterogeneous and not polyadenylated. The replicase function is to direct synthesis of antigenomic and genomic RNA which are encapsidated and non capped. As a consequence of the use of the same enzyme for both transcription and replication, these mechanisms need to be well coordinated. These processes may be regulated by proteins N and Z in a dose-dependent manner. Z protein inhibits the viral polymerase L und thus the viral transcription and RNA synthesis. This chain is RNA-directed RNA polymerase L, found in Sigmodon hispidus (Hispid cotton rat).